The sequence spans 100 residues: MTNRMELSGTVVKDPIRSQSPAGISHCRFWLEHRSVVVEADLPRQVFCRMPVVVSGKGSQDITQQIVLGSNIKVSGFVAYQTGRNGVGKLVLHADDIIHI.

Residues 1–100 enclose the SSB domain; that stretch reads MTNRMELSGT…VLHADDIIHI (100 aa).

It belongs to the PriB family. As to quaternary structure, homodimer. Interacts with PriA and DnaT. Component of the replication restart primosome. Primosome assembly occurs via a 'hand-off' mechanism. PriA binds to replication forks, subsequently PriB then DnaT bind; DnaT then displaces ssDNA to generate the helicase loading substrate.

In terms of biological role, involved in the restart of stalled replication forks, which reloads the replicative helicase on sites other than the origin of replication; the PriA-PriB pathway is the major replication restart pathway. During primosome assembly it facilitates complex formation between PriA and DnaT on DNA; stabilizes PriA on DNA. Stimulates the DNA unwinding activity of PriA helicase. In Vibrio vulnificus (strain CMCP6), this protein is Replication restart protein PriB.